A 114-amino-acid chain; its full sequence is Large ribosomal subunit protein uL22 (114 aa).

This sequence belongs to the universal ribosomal protein uL22 family. In terms of assembly, part of the 50S ribosomal subunit.

Functionally, this protein binds specifically to 23S rRNA; its binding is stimulated by other ribosomal proteins, e.g. L4, L17, and L20. It is important during the early stages of 50S assembly. It makes multiple contacts with different domains of the 23S rRNA in the assembled 50S subunit and ribosome. Its function is as follows. The globular domain of the protein is located near the polypeptide exit tunnel on the outside of the subunit, while an extended beta-hairpin is found that lines the wall of the exit tunnel in the center of the 70S ribosome. In Streptococcus pyogenes serotype M6 (strain ATCC BAA-946 / MGAS10394), this protein is Large ribosomal subunit protein uL22.